The following is an 814-amino-acid chain: Glycosyltransferase GlyD (814 aa).

Positions 1–264 are GT8 domain; the sequence is MNKTIVLAGD…SQILQHHMGE (264 aa). UDP-binding positions include 8–13 and 102–103; these read AGDRNY and DS. Mn(2+) contacts are provided by aspartate 102, aspartate 104, and histidine 226. 226–232 is a binding site for UDP; that stretch reads HFTTYRK. The segment at 542-814 is GT-D domain; it reads EKPLDIIQVK…NSQIVARILN (273 aa).

In the N-terminal section; belongs to the glycosyltransferase 8 family. The protein in the C-terminal section; belongs to the GT-D family.

It functions in the pathway protein modification; protein glycosylation. Functionally, involved in the polymorphic O-glycosylation of the serine-rich repeat protein PsrP. Catalyzes the third step in glycosylation PsrP in this bacteria. Transfers glucose from UDP-glucose to the terminal glucose moiety of already-glycosylated PsrP (using truncated substrates with PsrP SSR1-GlcNAc-Glc); the C-terminal GT-D domain is sufficient for this reaction in vitro. Also transfers galactose from UDP-galactose to the terminal glucose moiety of already-glycosylated PsrP; the C-terminal GT-D domain is also sufficient for this reaction in vitro. Activity is much higher with UDP-glucose, and the enzyme has a very marked preference for PsrP substrate that has already been modified by GlcNAc and glucose. In vitro has hydrolytic activity against UDP-galactose and to a lesser extent against UDP-glucose. Its function is as follows. Also catalyzes the fourth step in glycosylation of PsrP in this bacteria. Can transfer the sugar from both UDP-glucose and UDP-galactose to the terminal sugar moiety of PsrP-GlcNAc-Glc-Glc and PsrP-GlcNAc-Glc-Gal; the C-terminal GT-D domain is also sufficient for this reaction in vitro (using truncated substrates with glycosylated PsrP SSR1). The N-terminal GT-D domain can transfer galactose from UDP-galactose to PsrP-GlcNAc-Glc-Gal or PsrP-GlcNAc-Glc-Glc in the fourth step. The chain is Glycosyltransferase GlyD from Streptococcus pneumoniae serotype 4 (strain ATCC BAA-334 / TIGR4).